The following is a 173-amino-acid chain: Crossover junction endodeoxyribonuclease RuvC (173 aa).

Catalysis depends on residues Asp-8, Glu-69, and Asp-141. Residues Asp-8, Glu-69, and Asp-141 each contribute to the Mg(2+) site.

The protein belongs to the RuvC family. Homodimer which binds Holliday junction (HJ) DNA. The HJ becomes 2-fold symmetrical on binding to RuvC with unstacked arms; it has a different conformation from HJ DNA in complex with RuvA. In the full resolvosome a probable DNA-RuvA(4)-RuvB(12)-RuvC(2) complex forms which resolves the HJ. The cofactor is Mg(2+).

The protein resides in the cytoplasm. It carries out the reaction Endonucleolytic cleavage at a junction such as a reciprocal single-stranded crossover between two homologous DNA duplexes (Holliday junction).. Its function is as follows. The RuvA-RuvB-RuvC complex processes Holliday junction (HJ) DNA during genetic recombination and DNA repair. Endonuclease that resolves HJ intermediates. Cleaves cruciform DNA by making single-stranded nicks across the HJ at symmetrical positions within the homologous arms, yielding a 5'-phosphate and a 3'-hydroxyl group; requires a central core of homology in the junction. The consensus cleavage sequence is 5'-(A/T)TT(C/G)-3'. Cleavage occurs on the 3'-side of the TT dinucleotide at the point of strand exchange. HJ branch migration catalyzed by RuvA-RuvB allows RuvC to scan DNA until it finds its consensus sequence, where it cleaves and resolves the cruciform DNA. The protein is Crossover junction endodeoxyribonuclease RuvC of Xylella fastidiosa (strain Temecula1 / ATCC 700964).